The chain runs to 317 residues: Protoheme IX farnesyltransferase (317 aa).

8 helical membrane passes run 25 to 45 (FFALLKPRVMALVIFTALVGM), 54 to 74 (PVIAAVSLLMIAVGAGASGCL), 126 to 146 (LAAGLLAFTIAFYAVIYSMWL), 154 to 174 (IVIGGAAGALPPMIGQAVVTG), 181 to 201 (LVLFLIIFVWTPPHFWALALV), 227 to 244 (IVAYTLLLAPLGLAPVAL), 249 to 271 (LIYGLVALLGGLAMLALSLQVYH), and 281 to 301 (AAMGLFGFSILYLFLLFSALL).

This sequence belongs to the UbiA prenyltransferase family. Protoheme IX farnesyltransferase subfamily.

Its subcellular location is the cell inner membrane. The catalysed reaction is heme b + (2E,6E)-farnesyl diphosphate + H2O = Fe(II)-heme o + diphosphate. The protein operates within porphyrin-containing compound metabolism; heme O biosynthesis; heme O from protoheme: step 1/1. Functionally, converts heme B (protoheme IX) to heme O by substitution of the vinyl group on carbon 2 of heme B porphyrin ring with a hydroxyethyl farnesyl side group. This Methylobacterium sp. (strain 4-46) protein is Protoheme IX farnesyltransferase.